A 715-amino-acid polypeptide reads, in one-letter code: Protein Hook homolog 1 (715 aa).

A Calponin-homology (CH) domain is found at threonine 6–alanine 122. Coiled-coil stretches lie at residues alanine 167–leucine 434 and isoleucine 463–leucine 656.

The protein belongs to the hook family. Interacts with microtubules.

It localises to the cytoplasm. The protein resides in the cytoskeleton. Its function is as follows. May function to promote vesicle trafficking and/or fusion. The sequence is that of Protein Hook homolog 1 (hook1) from Danio rerio (Zebrafish).